The chain runs to 182 residues: Hexose transport activator protein (182 aa).

Residues G46–E65 are disordered.

In terms of biological role, multicopy expression suppresses glucose-uptake defects in various yeast mutants. The polypeptide is Hexose transport activator protein (AHT1) (Saccharomyces cerevisiae (strain ATCC 204508 / S288c) (Baker's yeast)).